A 243-amino-acid polypeptide reads, in one-letter code: Adenosine 5'-phosphosulfate reductase (243 aa).

4 residues coordinate [4Fe-4S] cluster: Cys126, Cys127, Cys209, and Cys212. Cys235 (nucleophile; cysteine thiosulfonate intermediate) is an active-site residue.

This sequence belongs to the PAPS reductase family. CysH subfamily. It depends on [4Fe-4S] cluster as a cofactor.

The protein resides in the cytoplasm. It carries out the reaction [thioredoxin]-disulfide + sulfite + AMP + 2 H(+) = adenosine 5'-phosphosulfate + [thioredoxin]-dithiol. It participates in sulfur metabolism; hydrogen sulfide biosynthesis; sulfite from sulfate. Functionally, catalyzes the formation of sulfite from adenosine 5'-phosphosulfate (APS) using thioredoxin as an electron donor. The protein is Adenosine 5'-phosphosulfate reductase of Staphylococcus epidermidis (strain ATCC 12228 / FDA PCI 1200).